A 106-amino-acid polypeptide reads, in one-letter code: Violacin-A (106 aa).

An N-terminal signal peptide occupies residues 1-29 (MDAQKMKMVIGLVLVATTAFALMIPAASA). The propeptide occupies 30-79 (VDDFITRRAYDNLVKSGAIKDIPVMAKTIISNPVLEEGMLTYYTNKKLGD). 3 disulfides stabilise this stretch: cysteine 84–cysteine 98, cysteine 88–cysteine 100, and cysteine 93–cysteine 105.

The protein belongs to the cyclotide family. Moebius subfamily. In terms of processing, violacin-A is not a cyclic peptide.

In terms of biological role, probably participates in a plant defense mechanism. Has low hemolytic activity. The chain is Violacin-A from Viola odorata (Sweet violet).